The following is a 436-amino-acid chain: Cholecystokinin receptor type A (436 aa).

Over 1 to 41 (MDVVDSLLMNGSNITPPCELGLENETLFCLDQPQPSKEWQS) the chain is Extracellular. N-linked (GlcNAc...) asparagine glycosylation is found at Asn10 and Asn24. The cysteines at positions 18 and 29 are disulfide-linked. A helical membrane pass occupies residues 42-67 (AVQILLYSFIFLLSVLGNTLVITVLI). Residues 68–77 (RNKRMRTVTN) are Cytoplasmic-facing. Residues 78–104 (IFLLSLAVSDLMLCLFCMPFNLIPNLL) traverse the membrane as a helical segment. Topologically, residues 105 to 115 (KDFIFGSAVCK) are extracellular. A disulfide bridge connects residues Cys114 and Cys196. Residues 116-137 (TTTYFMGTSVSVSTFNLVAISL) traverse the membrane as a helical segment. The Cytoplasmic portion of the chain corresponds to 138–157 (ERYGAICRPLQSRVWQTKSH). Residues 158–178 (ALKVIAATWCLSFTIMTPYPI) traverse the membrane as a helical segment. At 179 to 210 (YSNLVPFTKNNNQTANMCRFLLPSDAMQQSWQ) the chain is on the extracellular side. Residue Asn190 is glycosylated (N-linked (GlcNAc...) asparagine). Residues 211-234 (TFLLLILFLIPGVVMVVAYGLISL) form a helical membrane-spanning segment. Over 235–321 (ELYQGIKFDA…NLIAKKRVIR (87 aa)) the chain is Cytoplasmic. The disordered stretch occupies residues 252 to 280 (EKRLSSGGGGGGGSSSSRYEDSDGCYLQK). A helical membrane pass occupies residues 322-342 (MLIVIVVLFFLCWMPIFSANA). The Extracellular segment spans residues 343-357 (WRAYDTVSAEKHLSG). The helical transmembrane segment at 358–381 (TPISFILLLSYTSSCVNPIIYCFM) threads the bilayer. Residues 382 to 436 (NKRFRLGFMATFPCCPNPGPTGVRGEVGEEEDGRTIRASLSRYSYSHMSTSAPPH) lie on the Cytoplasmic side of the membrane. A lipid anchor (S-palmitoyl cysteine) is attached at Cys395.

It belongs to the G-protein coupled receptor 1 family.

The protein resides in the cell membrane. Functionally, receptor for cholecystokinin. Mediates pancreatic growth and enzyme secretion, smooth muscle contraction of the gall bladder and stomach. Has a 1000-fold higher affinity for CCK rather than for gastrin. It modulates feeding and dopamine-induced behavior in the central and peripheral nervous system. This receptor mediates its action by association with G proteins that activate a phosphatidylinositol-calcium second messenger system. The sequence is that of Cholecystokinin receptor type A (Cckar) from Mus musculus (Mouse).